Reading from the N-terminus, the 160-residue chain is Small ribosomal subunit protein uS9 (160 aa).

This sequence belongs to the universal ribosomal protein uS9 family.

This Bradyrhizobium sp. (strain ORS 278) protein is Small ribosomal subunit protein uS9.